Consider the following 566-residue polypeptide: Erythroid membrane-associated protein (566 aa).

The first 29 residues, 1–29 (MERPSPCGSWLVGCLFTIAVFQPPVQVLG), serve as a signal peptide directing secretion. Residues 30 to 139 (DAGKVYIAPL…SSREDNVTLQ (110 aa)) enclose the Ig-like V-type domain. Residues 30–246 (DAGKVYIAPL…PERGSLSSPA (217 aa)) are Extracellular-facing. Cys-47 and Cys-123 are disulfide-bonded. Asn-135 and Asn-214 each carry an N-linked (GlcNAc...) asparagine glycan. The helical transmembrane segment at 247–267 (VALSVVLPVLGLLILLGIWLI) threads the bilayer. The Cytoplasmic portion of the chain corresponds to 268 to 566 (CKQKKSKEKL…ALKGLKVPSL (299 aa)). The B30.2/SPRY domain occupies 311 to 509 (KLKRAAANAG…LIICTELQKS (199 aa)). Phosphoserine is present on Ser-509.

This sequence belongs to the immunoglobulin superfamily. BTN/MOG family. Post-translationally, glycosylated. As to expression, expressed in spleen and bone marrow.

It localises to the cell membrane. The protein resides in the cytoplasm. In terms of biological role, possible role as a cell-adhesion or receptor molecule of erythroid cells. This Mus musculus (Mouse) protein is Erythroid membrane-associated protein (Ermap).